Reading from the N-terminus, the 174-residue chain is ATP-dependent protease subunit HslV (174 aa).

Residue Thr-2 is part of the active site. Gly-157, Cys-160, and Thr-163 together coordinate Na(+).

The protein belongs to the peptidase T1B family. HslV subfamily. A double ring-shaped homohexamer of HslV is capped on each side by a ring-shaped HslU homohexamer. The assembly of the HslU/HslV complex is dependent on binding of ATP.

The protein localises to the cytoplasm. It carries out the reaction ATP-dependent cleavage of peptide bonds with broad specificity.. With respect to regulation, allosterically activated by HslU binding. Functionally, protease subunit of a proteasome-like degradation complex believed to be a general protein degrading machinery. The chain is ATP-dependent protease subunit HslV from Shewanella piezotolerans (strain WP3 / JCM 13877).